Consider the following 144-residue polypeptide: Large ribosomal subunit protein uL16 (144 aa).

Residues 1–14 show a composition bias toward basic residues; that stretch reads MLMPKRVKYRKPHR. Residues 1 to 25 are disordered; that stretch reads MLMPKRVKYRKPHRPGTQGKATRGN.

This sequence belongs to the universal ribosomal protein uL16 family. Part of the 50S ribosomal subunit.

Functionally, binds 23S rRNA and is also seen to make contacts with the A and possibly P site tRNAs. This Moorella thermoacetica (strain ATCC 39073 / JCM 9320) protein is Large ribosomal subunit protein uL16.